The following is a 315-amino-acid chain: Olfactory receptor 2V2 (315 aa).

The Extracellular portion of the chain corresponds to 1–26 (METWVNQSYTDGFFLLGIFSHSTADL). An N-linked (GlcNAc...) asparagine glycan is attached at N6. Residues 27–50 (VLFSVVMAVFTVALCGNVLLIFLI) traverse the membrane as a helical segment. The Cytoplasmic segment spans residues 51 to 58 (YMDPHLHT). The chain crosses the membrane as a helical span at residues 59 to 80 (PMYFFLSQLSLMDLMLVCTNVP). Residues 81–101 (KMAANFLSGRKSISFVGCGIQ) lie on the Extracellular side of the membrane. C98 and C190 are oxidised to a cystine. Residues 102 to 121 (IGLFVCLVGSEGLLLGLMAY) form a helical membrane-spanning segment. The Cytoplasmic portion of the chain corresponds to 122-140 (DRYVAISHPLHYPILMNQR). A helical membrane pass occupies residues 141–159 (VCLQITGSSWAFGIIDGLI). Over 160-196 (QMVVVMNFPYCGLRKVNHFFCEMLSLLKLACVDTSLF) the chain is Extracellular. The chain crosses the membrane as a helical span at residues 197-220 (EKVIFACCVFMLLFPFSIIVASYA). The Cytoplasmic segment spans residues 221-237 (HILGTVLQMHSAQAWKK). A helical transmembrane segment spans residues 238–260 (ALATCSSHLTAVTLFYGAAMFIY). Topologically, residues 261–273 (LRPRHYRAPSHDK) are extracellular. A helical transmembrane segment spans residues 274 to 293 (VASIFYTVLTPMLNPLIYSL). At 294–315 (RNREVMGALRKGLDRCRIGSQH) the chain is on the cytoplasmic side.

It belongs to the G-protein coupled receptor 1 family.

The protein resides in the cell membrane. Odorant receptor. The polypeptide is Olfactory receptor 2V2 (OR2V2) (Homo sapiens (Human)).